A 925-amino-acid chain; its full sequence is Centrosomal protein of 104 kDa (925 aa).

The stretch at 209–289 (EVAQIIRKLD…RAEVYEQLEL (81 aa)) forms a coiled coil. HEAT repeat units follow at residues 529-567 (TIPVLLTRTGDSSARLRVTAANFIQEMALFKEVKSLQII) and 604-640 (GFTIDNVMKFSVSALEHRVYEVRETAVRIILDMYRQH). A coiled-coil region spans residues 677–725 (DAEMRARRKAATEEAEKQKKEEIKALQGQLAALKEIQAEVQEKESDAVK). The segment at 883–925 (PALQPGKSSAVAASGPLGSKAGSKIPTPKGGLSKSSSRTYAKR) is disordered. The span at 915–925 (SKSSSRTYAKR) shows a compositional bias: polar residues.

As to quaternary structure, interacts with CCP110 and CEP97. Interacts with ARMC9, TOGARAM1, CCDC66 and CSPP1.

Its subcellular location is the cell projection. The protein resides in the cilium. It localises to the cytoplasm. It is found in the cytoskeleton. The protein localises to the microtubule organizing center. Its subcellular location is the centrosome. The protein resides in the centriole. It localises to the spindle pole. Functionally, required for ciliogenesis and for structural integrity at the ciliary tip. The protein is Centrosomal protein of 104 kDa (CEP104) of Homo sapiens (Human).